Reading from the N-terminus, the 172-residue chain is Shikimate kinase (172 aa).

17-22 (GTGKST) serves as a coordination point for ATP. S21 contributes to the Mg(2+) binding site. Substrate-binding residues include D39, R63, and G84. R122 is a binding site for ATP. Residue R140 participates in substrate binding.

Belongs to the shikimate kinase family. As to quaternary structure, monomer. Mg(2+) is required as a cofactor.

It is found in the cytoplasm. The catalysed reaction is shikimate + ATP = 3-phosphoshikimate + ADP + H(+). The protein operates within metabolic intermediate biosynthesis; chorismate biosynthesis; chorismate from D-erythrose 4-phosphate and phosphoenolpyruvate: step 5/7. Functionally, catalyzes the specific phosphorylation of the 3-hydroxyl group of shikimic acid using ATP as a cosubstrate. The sequence is that of Shikimate kinase from Staphylococcus haemolyticus (strain JCSC1435).